We begin with the raw amino-acid sequence, 287 residues long: Cell division protein ZipA (287 aa).

Residue Met1 is a topological domain, periplasmic. Residues 2 to 22 (EIGLREWLIVIGIIVIAGILF) traverse the membrane as a helical segment. At 23 to 287 (DGWRRMRGGK…FERRALTQKR (265 aa)) the chain is on the cytoplasmic side. A disordered region spans residues 70–143 (LDEHDLPSMS…APRQSVNDQP (74 aa)).

The protein belongs to the ZipA family. As to quaternary structure, interacts with FtsZ via their C-terminal domains.

Its subcellular location is the cell inner membrane. Functionally, essential cell division protein that stabilizes the FtsZ protofilaments by cross-linking them and that serves as a cytoplasmic membrane anchor for the Z ring. Also required for the recruitment to the septal ring of downstream cell division proteins. The polypeptide is Cell division protein ZipA (Pseudomonas fluorescens (strain SBW25)).